An 842-amino-acid polypeptide reads, in one-letter code: ATP-binding cassette sub-family B member 6 (842 aa).

The Lumenal segment spans residues 1–26; it reads MVTVGNYCETEGPAGPAWTQNGLSPC. A required for the lysosomal targeting region spans residues 1–205; the sequence is MVTVGNYCET…SGGLFILGLW (205 aa). Positions 1–236 are required for ATPase activity; sequence MVTVGNYCET…GNQGRSTDRR (236 aa). Cysteines 8 and 26 form a disulfide. The helical transmembrane segment at 27-47 threads the bilayer; sequence FFFTLVPSTLLTLGVLALVLV. Residues 48–72 lie on the Cytoplasmic side of the membrane; that stretch reads LPRRRREVPAGPEELSWAAGPRVAP. Residues 73 to 93 form a helical membrane-spanning segment; that stretch reads YVLQLFLATLQMALPLAGLAG. Residues 94-106 lie on the Lumenal side of the membrane; it reads RVGTARGVRLPGY. Residues 107-127 form a helical membrane-spanning segment; that stretch reads LLLASVLESLASVCGLWLLVV. Topologically, residues 128–147 are cytoplasmic; that stretch reads ERSQARQSLAMGVWMKFRHS. A helical membrane pass occupies residues 148 to 168; it reads LGLLLLWTVTFAAENLALVSW. Residues 169–185 lie on the Lumenal side of the membrane; sequence NSPQWWWARADLGQQVQ. A helical membrane pass occupies residues 186–206; sequence FGLWVLRYVTSGGLFILGLWA. The Cytoplasmic segment spans residues 207 to 263; that stretch reads PGLRPQSYTLHVHEEDQDVGGNQGRSTDRRSTWRDLGRKLRLLSSYLWPRGSPSLQL. The chain crosses the membrane as a helical span at residues 264–284; sequence IVLICLGLMGLERALNVLVPI. Residues 265 to 556 form the ABC transmembrane type-1 domain; sequence VLICLGLMGL…FGTYYRMIQT (292 aa). The Lumenal segment spans residues 285-291; the sequence is FYRDIVN. Residues 292 to 312 form a helical membrane-spanning segment; the sequence is LLTAKAPWSSLAWTVTTYVFL. At 313–375 the chain is on the cytoplasmic side; the sequence is KFLQGGGTGS…TGEVLRIVDR (63 aa). A helical membrane pass occupies residues 376-396; that stretch reads GTSSVTGLLSYLVFSIIPTLA. A topological domain (lumenal) is located at residue aspartate 397. Residues 398–418 form a helical membrane-spanning segment; it reads IIIGIIYFSMFFNAWFGLIVF. At 419–499 the chain is on the cytoplasmic side; that stretch reads LCMSLYLILT…STASLVVLNQ (81 aa). A helical membrane pass occupies residues 500–520; the sequence is TQNLVIGLGLLAGSLLCAYFV. Residues 521–529 are Lumenal-facing; it reads SEQKLQVGD. Residues 530–550 traverse the membrane as a helical segment; it reads FVLFGTYITQLYMPLNWFGTY. Residues 551 to 842 are Cytoplasmic-facing; it reads YRMIQTNFID…PEESKPQDTA (292 aa). The 235-residue stretch at 590-824 folds into the ABC transporter domain; that stretch reads IEFENVHFSY…GGVYAEMWQL (235 aa). ATP contacts are provided by residues tyrosine 599 and 623-634; that span reads GPSGAGKSTILR.

This sequence belongs to the ABC transporter superfamily. ABCB family. Heavy Metal importer (TC 3.A.1.210) subfamily. In terms of assembly, homodimer. Post-translationally, N-glycosylated.

The protein resides in the cell membrane. Its subcellular location is the mitochondrion outer membrane. It localises to the endoplasmic reticulum membrane. The protein localises to the golgi apparatus membrane. It is found in the endosome membrane. The protein resides in the lysosome membrane. Its subcellular location is the late endosome membrane. It localises to the early endosome membrane. The protein localises to the secreted. It is found in the extracellular exosome. The protein resides in the mitochondrion. Its subcellular location is the endosome. It localises to the multivesicular body membrane. The protein localises to the melanosome membrane. The enzyme catalyses coproporphyrin III(in) + ATP + H2O = coproporphyrin III(out) + ADP + phosphate + H(+). It catalyses the reaction coproporphyrinogen III(in) + ATP + H2O = coproporphyrinogen III(out) + ADP + phosphate + H(+). The catalysed reaction is heme b(in) + ATP + H2O = heme b(out) + ADP + phosphate + H(+). It carries out the reaction pheophorbide a(in) + ATP + H2O = pheophorbide a(out) + ADP + phosphate + H(+). The enzyme catalyses protoporphyrin IX(in) + ATP + H2O = protoporphyrin IX(out) + ADP + phosphate + H(+). It catalyses the reaction coproporphyrin I(in) + ATP + H2O = coproporphyrin I(out) + ADP + phosphate + H(+). The catalysed reaction is uroporphyrin I(in) + ATP + H2O = uroporphyrin I(out) + ADP + phosphate + H(+). It carries out the reaction uroporphyrin III(in) + ATP + H2O = uroporphyrin III(out) + ADP + phosphate + H(+). ATP-dependent transporter that catalyzes the transport of a broad-spectrum of porphyrins from the cytoplasm to the extracellular space through the plasma membrane or into the vesicle lumen. May also function as an ATP-dependent importer of porphyrins from the cytoplasm into the mitochondria, in turn may participate in the de novo heme biosynthesis regulation and in the coordination of heme and iron homeostasis during phenylhydrazine stress. May play a key role in the early steps of melanogenesis producing PMEL amyloid fibrils. In vitro, it confers to cells a resistance to toxic metal such as arsenic and cadmium and against chemotherapeutics agent such as 5-fluorouracil, SN-38 and vincristin. In addition may play a role in the transition metal homeostasis. This is ATP-binding cassette sub-family B member 6 from Mus musculus (Mouse).